The primary structure comprises 229 residues: Isopentenyl-diphosphate delta-isomerase (229 aa).

Substrate is bound at residue Lys39. Residues His43 and His54 each coordinate Mg(2+). Residues 52-202 (LLHRAFSMFI…QYGFTPWFKL (151 aa)) form the Nudix hydrolase domain. Substrate-binding residues include Gln72 and Lys77. Residue Cys89 is part of the active site. Substrate is bound at residue Ser90. 2 residues coordinate Mg(2+): Glu152 and Glu154. Glu154 is an active-site residue.

The protein belongs to the IPP isomerase type 1 family. It depends on Mg(2+) as a cofactor.

The protein resides in the cytoplasm. The protein localises to the nucleus. The enzyme catalyses isopentenyl diphosphate = dimethylallyl diphosphate. It functions in the pathway isoprenoid biosynthesis; dimethylallyl diphosphate biosynthesis; dimethylallyl diphosphate from isopentenyl diphosphate: step 1/1. In terms of biological role, isopentenyl-diphosphate delta-isomerase; part of the second module of ergosterol biosynthesis pathway that includes the middle steps of the pathway. Idi1 catalyzes the 1,3-allylic rearrangement of isopentenyl (IPP) to its highly electrophilic allylic isomer, dimethylallyl diphosphate (DMAPP). The second module is carried out in the vacuole and involves the formation of farnesyl diphosphate, which is also an important intermediate in the biosynthesis of ubiquinone, dolichol, heme and prenylated proteins. Activity by the mevalonate kinase erg12 first converts mevalonate into 5-phosphomevalonate. 5-phosphomevalonate is then further converted to 5-diphosphomevalonate by the phosphomevalonate kinase erg8. The diphosphomevalonate decarboxylase mvd1 then produces isopentenyl diphosphate. The isopentenyl-diphosphate delta-isomerase idi1 then catalyzes the 1,3-allylic rearrangement of the homoallylic substrate isopentenyl (IPP) to its highly electrophilic allylic isomer, dimethylallyl diphosphate (DMAPP). Finally the farnesyl diphosphate synthase fps1 catalyzes the sequential condensation of isopentenyl pyrophosphate with dimethylallyl pyrophosphate, and then with the resultant geranylpyrophosphate to the ultimate product farnesyl pyrophosphate. The polypeptide is Isopentenyl-diphosphate delta-isomerase (Schizosaccharomyces pombe (strain 972 / ATCC 24843) (Fission yeast)).